The sequence spans 257 residues: MQTMTIKEAENVLKEIMNEEDDRFQLLMKDDRKGVQKLVLKWYKQKELEQKEKEKFFEMSKYENALREKGVTYIAGIDEVGRGPLAGPVVTAAVVLPEDFYIPGLNDSKKLSEAKRERFYDEIKVQAIAIGVGIVSPQVIDDINIYQATKQAMLDAVANLSCTPQHLLIDAMKLPTPIPQTSIIKGDAKSVSISAASIIAKVTRDRMMKELGGKYPEYGFEQHMGYGTKQHLEAIEVHGVLDEHRKSFAPIKDMIQK.

One can recognise an RNase H type-2 domain in the interval 72–257 (TYIAGIDEVG…FAPIKDMIQK (186 aa)). The a divalent metal cation site is built by D78, E79, and D170.

This sequence belongs to the RNase HII family. It depends on Mn(2+) as a cofactor. The cofactor is Mg(2+).

The protein resides in the cytoplasm. It carries out the reaction Endonucleolytic cleavage to 5'-phosphomonoester.. In terms of biological role, endonuclease that specifically degrades the RNA of RNA-DNA hybrids. This Bacillus cereus (strain ATCC 14579 / DSM 31 / CCUG 7414 / JCM 2152 / NBRC 15305 / NCIMB 9373 / NCTC 2599 / NRRL B-3711) protein is Ribonuclease HII.